The chain runs to 372 residues: Cytochrome b (372 aa).

Helical transmembrane passes span 25 to 45, 69 to 90, 105 to 125, and 170 to 190; these read FGSMLLTCLMLQTITGFFLAL, WIMQNLHAISASLFFVCIYIHI, WLSGTALLITLMATAFFGYVL, and FFALHFILPFIIISLSSIHII. 2 residues coordinate heme b: histidine 75 and histidine 89. Histidine 174 and histidine 188 together coordinate heme b. Histidine 193 is an a ubiquinone binding site. A run of 4 helical transmembrane segments spans residues 218 to 238, 280 to 300, 312 to 332, and 339 to 358; these read YKDMLMATTMITLLFLILSFA, LGGTLALIMSVMILTTMPFTH, LSQILFWTLIATFITITWTAS, and FITISQTTSIIYFFFFITTP.

Belongs to the cytochrome b family. As to quaternary structure, the cytochrome bc1 complex contains 3 respiratory subunits (MT-CYB, CYC1 and UQCRFS1), 2 core proteins (UQCRC1 and UQCRC2) and probably 6 low-molecular weight proteins. Requires heme b as cofactor.

It localises to the mitochondrion inner membrane. In terms of biological role, component of the ubiquinol-cytochrome c reductase complex (complex III or cytochrome b-c1 complex) that is part of the mitochondrial respiratory chain. The b-c1 complex mediates electron transfer from ubiquinol to cytochrome c. Contributes to the generation of a proton gradient across the mitochondrial membrane that is then used for ATP synthesis. This Naja nivea (Cape cobra) protein is Cytochrome b (MT-CYB).